We begin with the raw amino-acid sequence, 242 residues long: Carboxy-S-adenosyl-L-methionine synthase (242 aa).

Residues Y39, 64–66 (GCS), 89–90 (DN), 117–118 (DI), N132, and R199 contribute to the S-adenosyl-L-methionine site.

The protein belongs to the class I-like SAM-binding methyltransferase superfamily. Cx-SAM synthase family. Homodimer.

It catalyses the reaction prephenate + S-adenosyl-L-methionine = carboxy-S-adenosyl-L-methionine + 3-phenylpyruvate + H2O. Functionally, catalyzes the conversion of S-adenosyl-L-methionine (SAM) to carboxy-S-adenosyl-L-methionine (Cx-SAM). This Aliivibrio fischeri (strain ATCC 700601 / ES114) (Vibrio fischeri) protein is Carboxy-S-adenosyl-L-methionine synthase.